The primary structure comprises 376 residues: Chaperone protein DnaJ (376 aa).

Positions 4–68 constitute a J domain; that stretch reads DYYQLLGVAR…ETRARYDQFG (65 aa). A CR-type zinc finger spans residues 135 to 217; sequence GGEKEIRVTH…CGGAGRLRRP (83 aa). Zn(2+)-binding residues include Cys148, Cys151, Cys165, Cys168, Cys191, Cys194, Cys205, and Cys208. CXXCXGXG motif repeat units follow at residues 148–155, 165–172, 191–198, and 205–212; these read CGTCQGSG, CTTCGGAG, CPTCEGSG, and CDDCGGAG.

This sequence belongs to the DnaJ family. As to quaternary structure, homodimer. Requires Zn(2+) as cofactor.

It is found in the cytoplasm. Functionally, participates actively in the response to hyperosmotic and heat shock by preventing the aggregation of stress-denatured proteins and by disaggregating proteins, also in an autonomous, DnaK-independent fashion. Unfolded proteins bind initially to DnaJ; upon interaction with the DnaJ-bound protein, DnaK hydrolyzes its bound ATP, resulting in the formation of a stable complex. GrpE releases ADP from DnaK; ATP binding to DnaK triggers the release of the substrate protein, thus completing the reaction cycle. Several rounds of ATP-dependent interactions between DnaJ, DnaK and GrpE are required for fully efficient folding. Also involved, together with DnaK and GrpE, in the DNA replication of plasmids through activation of initiation proteins. The polypeptide is Chaperone protein DnaJ (Synechococcus sp. (strain ATCC 27144 / PCC 6301 / SAUG 1402/1) (Anacystis nidulans)).